Here is a 585-residue protein sequence, read N- to C-terminus: Formate--tetrahydrofolate ligase (585 aa).

65 to 72 (TPHGEGKT) serves as a coordination point for ATP.

Belongs to the formate--tetrahydrofolate ligase family.

The catalysed reaction is (6S)-5,6,7,8-tetrahydrofolate + formate + ATP = (6R)-10-formyltetrahydrofolate + ADP + phosphate. Its pathway is one-carbon metabolism; tetrahydrofolate interconversion. The chain is Formate--tetrahydrofolate ligase from Shewanella baltica (strain OS195).